The following is a 551-amino-acid chain: CTP synthase (551 aa).

The interval 1–267 (MPKYVFVTGG…GRYVMEHLGW (267 aa)) is amidoligase domain. Residue S13 participates in CTP binding. Position 13 (S13) interacts with UTP. An ATP-binding site is contributed by 14–19 (SVGKGI). Y54 contributes to the L-glutamine binding site. D71 lines the ATP pocket. The Mg(2+) site is built by D71 and E141. CTP is bound by residues 148–150 (DIE), 188–193 (KTKPTQ), and K224. Residues 188 to 193 (KTKPTQ) and K224 each bind UTP. The Glutamine amidotransferase type-1 domain maps to 292-532 (RIALVGKYVE…IGVAKHVLRE (241 aa)). G353 contributes to the L-glutamine binding site. Catalysis depends on C380, which acts as the Nucleophile; for glutamine hydrolysis. L-glutamine contacts are provided by residues 381–384 (YGLH), E404, and R460. Catalysis depends on residues H505 and E507.

It belongs to the CTP synthase family. Homotetramer.

The enzyme catalyses UTP + L-glutamine + ATP + H2O = CTP + L-glutamate + ADP + phosphate + 2 H(+). The catalysed reaction is L-glutamine + H2O = L-glutamate + NH4(+). It catalyses the reaction UTP + NH4(+) + ATP = CTP + ADP + phosphate + 2 H(+). It functions in the pathway pyrimidine metabolism; CTP biosynthesis via de novo pathway; CTP from UDP: step 2/2. Its activity is regulated as follows. Allosterically activated by GTP, when glutamine is the substrate; GTP has no effect on the reaction when ammonia is the substrate. The allosteric effector GTP functions by stabilizing the protein conformation that binds the tetrahedral intermediate(s) formed during glutamine hydrolysis. Inhibited by the product CTP, via allosteric rather than competitive inhibition. In terms of biological role, catalyzes the ATP-dependent amination of UTP to CTP with either L-glutamine or ammonia as the source of nitrogen. Regulates intracellular CTP levels through interactions with the four ribonucleotide triphosphates. This is CTP synthase from Thermomicrobium roseum (strain ATCC 27502 / DSM 5159 / P-2).